The primary structure comprises 339 residues: Mitogen-activated protein kinase kinase kinase 18 (339 aa).

The Protein kinase domain maps to W3–L263. ATP contacts are provided by residues L9–V17 and K32. The active-site Proton acceptor is D131. S301 bears the Phosphoserine mark.

This sequence belongs to the protein kinase superfamily. Ser/Thr protein kinase family. In terms of assembly, interacts with ABI1. Binds to MKK3. Associates with SRK2E within the nucleus. In terms of processing, autophosphorylated. Unstable protein degraded by the proteasome pathway; this degradation is promoted by ABI1, but blocked by ABA. As to expression, expressed in roots, leaves and flowers.

It localises to the nucleus. The enzyme catalyses L-seryl-[protein] + ATP = O-phospho-L-seryl-[protein] + ADP + H(+). The catalysed reaction is L-threonyl-[protein] + ATP = O-phospho-L-threonyl-[protein] + ADP + H(+). Its activity is regulated as follows. Kinase activity is activated by abscisic acid (ABA). Inhibited by ABI1. Activated by SRK2E. Its function is as follows. Component of the abscisic acid (ABA) signaling pathway that acts as ABA signal transducer in the context of abiotic stresses. Triggers MPK1, MPK2, MPK7 and MPK14 activation in a MKK3-dependent manner and MPK6 activation in a MKK3-independent manner. Mediates the ABA-dependent activation of the MKK3-MPK7 module. Positive regulator of ABA responses leading to the induction of gene expression (e.g. RD29B and RAB18) and involved in various responses including stomatal development, stomatal movement, inhibition of germination and root growth. Promotes leaf senescence. The polypeptide is Mitogen-activated protein kinase kinase kinase 18 (Arabidopsis thaliana (Mouse-ear cress)).